The chain runs to 156 residues: Small ribosomal subunit protein uS7 (156 aa).

The protein belongs to the universal ribosomal protein uS7 family. In terms of assembly, part of the 30S ribosomal subunit. Contacts proteins S9 and S11.

One of the primary rRNA binding proteins, it binds directly to 16S rRNA where it nucleates assembly of the head domain of the 30S subunit. Is located at the subunit interface close to the decoding center, probably blocks exit of the E-site tRNA. The chain is Small ribosomal subunit protein uS7 from Ralstonia nicotianae (strain ATCC BAA-1114 / GMI1000) (Ralstonia solanacearum).